The chain runs to 484 residues: Glycogen synthase (484 aa).

K15 is a binding site for ADP-alpha-D-glucose.

It belongs to the glycosyltransferase 1 family. Bacterial/plant glycogen synthase subfamily.

It catalyses the reaction [(1-&gt;4)-alpha-D-glucosyl](n) + ADP-alpha-D-glucose = [(1-&gt;4)-alpha-D-glucosyl](n+1) + ADP + H(+). The protein operates within glycan biosynthesis; glycogen biosynthesis. In terms of biological role, synthesizes alpha-1,4-glucan chains using ADP-glucose. In Bacillus licheniformis (strain ATCC 14580 / DSM 13 / JCM 2505 / CCUG 7422 / NBRC 12200 / NCIMB 9375 / NCTC 10341 / NRRL NRS-1264 / Gibson 46), this protein is Glycogen synthase.